Consider the following 551-residue polypeptide: Hedycaryol synthase TPS20CT (551 aa).

R266, D303, D307, R444, and D447 together coordinate (2E,6E)-farnesyl diphosphate. Residues D303 and D307 each contribute to the Mg(2+) site. The DDXXD motif motif lies at 303–307; sequence DDIYD. Residues D447, S451, and E455 each contribute to the Mg(2+) site.

Belongs to the terpene synthase family. Tpsb subfamily. Mg(2+) serves as cofactor. It depends on Mn(2+) as a cofactor. As to expression, highly expressed in glandular trichomes.

The catalysed reaction is (2E,6E)-farnesyl diphosphate + H2O = (2E,6E)-hedycaryol + diphosphate. Its pathway is secondary metabolite biosynthesis; terpenoid biosynthesis. Functionally, involved in sesquiterpene olefins biosynthesis, constituants of cannabinoids and terpenoids-rich resins. Catalyzes primarily the conversion of (2E)-farnesyl diphosphate to hedycaryol, which is spontaneously converted to elemol as a thermal degradation product. In Cannabis sativa (Hemp), this protein is Hedycaryol synthase TPS20CT.